The following is a 405-amino-acid chain: Serpin I2 (405 aa).

An N-terminal signal peptide occupies residues 1 to 18 (MDTIFLWSLLLLFFGSQA). N202, N207, and N306 each carry an N-linked (GlcNAc...) asparagine glycan.

This sequence belongs to the serpin family. Expressed in pancreas and adipose tissues.

The protein resides in the secreted. The protein is Serpin I2 (SERPINI2) of Homo sapiens (Human).